The following is a 120-amino-acid chain: Basic phospholipase A2 homolog LmutTX (120 aa).

7 disulfide bridges follow: Cys26–Cys114, Cys28–Cys44, Cys43–Cys95, Cys49–Cys120, Cys50–Cys88, Cys57–Cys81, and Cys75–Cys86.

It belongs to the phospholipase A2 family. Group II subfamily. K49 sub-subfamily. Monomer. As to expression, expressed by the venom gland.

Its subcellular location is the secreted. Its function is as follows. Snake venom phospholipase A2 homolog that lacks enzymatic activity. Shows moderate cytotoxicity against C2C12 myotubes (activity above 200 ug/mL). Also shows antibacterial activity against both Gram-positive and Gram-negative bacteria. A model of myotoxic mechanism has been proposed: an apo Lys49-PLA2 is activated by the entrance of a hydrophobic molecule (e.g. fatty acid) at the hydrophobic channel of the protein leading to a reorientation of a monomer. This reorientation causes a transition between 'inactive' to 'active' states, causing alignment of C-terminal and membrane-docking sites (MDoS) side-by-side and putting the membrane-disruption sites (MDiS) in the same plane, exposed to solvent and in a symmetric position for both monomers. The MDoS region stabilizes the toxin on membrane by the interaction of charged residues with phospholipid head groups. Subsequently, the MDiS region destabilizes the membrane with penetration of hydrophobic residues. This insertion causes a disorganization of the membrane, allowing an uncontrolled influx of ions (i.e. calcium and sodium), and eventually triggering irreversible intracellular alterations and cell death. This Lachesis muta muta (Bushmaster) protein is Basic phospholipase A2 homolog LmutTX.